We begin with the raw amino-acid sequence, 403 residues long: Alpha-1-antiproteinase F (403 aa).

Positions 1–22 (SAIPRGLLLLAGLCCLVFGIMA) are cleaved as a signal peptide. N-linked (GlcNAc...) asparagine glycosylation is found at asparagine 55, asparagine 92, asparagine 155, asparagine 222, and asparagine 256. The RCL stretch occupies residues 358 to 377 (GATELEITPHSVPQDLFFNK).

Belongs to the serpin family.

Its subcellular location is the secreted. In terms of biological role, inhibits elastase, chymotrypsin, cathepsin G, plasmin, and trypsin. This chain is Alpha-1-antiproteinase F, found in Cavia porcellus (Guinea pig).